The following is a 249-amino-acid chain: Ubiquinone biosynthesis O-methyltransferase (249 aa).

Positions 44, 75, 96, and 138 each coordinate S-adenosyl-L-methionine.

It belongs to the methyltransferase superfamily. UbiG/COQ3 family.

It carries out the reaction a 3-demethylubiquinol + S-adenosyl-L-methionine = a ubiquinol + S-adenosyl-L-homocysteine + H(+). It catalyses the reaction a 3-(all-trans-polyprenyl)benzene-1,2-diol + S-adenosyl-L-methionine = a 2-methoxy-6-(all-trans-polyprenyl)phenol + S-adenosyl-L-homocysteine + H(+). It participates in cofactor biosynthesis; ubiquinone biosynthesis. Functionally, O-methyltransferase that catalyzes the 2 O-methylation steps in the ubiquinone biosynthetic pathway. In Paramagnetospirillum magneticum (strain ATCC 700264 / AMB-1) (Magnetospirillum magneticum), this protein is Ubiquinone biosynthesis O-methyltransferase.